The chain runs to 243 residues: NAD-dependent protein deacetylase (243 aa).

Positions 1–243 (MKHDLETLKH…VSVVKSLMTE (243 aa)) constitute a Deacetylase sirtuin-type domain. Residues Ala-24, Phe-35, Arg-36, Gln-105, Ile-107, Asp-108, and His-123 each contribute to the NAD(+) site. A nicotinamide-binding site is contributed by Phe-35. Ile-107 and Asp-108 together coordinate nicotinamide. Residue His-123 is the Proton acceptor of the active site. Zn(2+) contacts are provided by Cys-131, Cys-134, Cys-151, and Cys-154. Ser-192, Ser-193, Asn-215, and Asp-232 together coordinate NAD(+).

The protein belongs to the sirtuin family. Class U subfamily. Zn(2+) is required as a cofactor.

It localises to the cytoplasm. It carries out the reaction N(6)-acetyl-L-lysyl-[protein] + NAD(+) + H2O = 2''-O-acetyl-ADP-D-ribose + nicotinamide + L-lysyl-[protein]. Functionally, NAD-dependent protein deacetylase which modulates the activities of several enzymes which are inactive in their acetylated form. This is NAD-dependent protein deacetylase from Staphylococcus aureus (strain COL).